The chain runs to 219 residues: N-(5'-phosphoribosyl)anthranilate isomerase (219 aa).

The protein belongs to the TrpF family.

It carries out the reaction N-(5-phospho-beta-D-ribosyl)anthranilate = 1-(2-carboxyphenylamino)-1-deoxy-D-ribulose 5-phosphate. The protein operates within amino-acid biosynthesis; L-tryptophan biosynthesis; L-tryptophan from chorismate: step 3/5. The sequence is that of N-(5'-phosphoribosyl)anthranilate isomerase from Dehalococcoides mccartyi (strain ATCC BAA-2266 / KCTC 15142 / 195) (Dehalococcoides ethenogenes (strain 195)).